Here is a 301-residue protein sequence, read N- to C-terminus: MLQYGVLICGVVPVRKPRDIEKALEAPVTCLELRLDYLEADLAEVRPLLEHAVARRVVIFTVRRREEGGQWRGDEEGREALYRKLLELNPHYIDVEAESPIIGEVAKIKGKAQLIASRHDFEKTPPLDVLSQWAKKAAAVGDLVKIVTYAKEPGDGLRVLSLIGAVEKPTVAFAMGPAGAYTRVAAAALGSPIMYVSLGEATAPGQLTADAYYAALLALGITPSGGGLPALREALDWVDGGLMYLLKKRLEVCRDMGRLKKDAGLPIYDDVREAQVLRRAGDFKQIFELVVQMCKAVQLVA.

A 3-dehydroquinate dehydratase region spans residues 1–221 (MLQYGVLICG…YYAALLALGI (221 aa)). 3-dehydroquinate-binding positions include 32–34 (ELR) and Arg63. The active-site Proton donor/acceptor is the His119. Lys145 serves as the catalytic Schiff-base intermediate with substrate. Residues Arg183, Thr202, and Gln206 each coordinate 3-dehydroquinate. Residues 222–301 (TPSGGGLPAL…QMCKAVQLVA (80 aa)) enclose the Chorismate mutase domain.

It belongs to the type-I 3-dehydroquinase family. In terms of assembly, homodimer.

It catalyses the reaction 3-dehydroquinate = 3-dehydroshikimate + H2O. It functions in the pathway metabolic intermediate biosynthesis; chorismate biosynthesis; chorismate from D-erythrose 4-phosphate and phosphoenolpyruvate: step 3/7. Involved in the third step of the chorismate pathway, which leads to the biosynthesis of aromatic amino acids. Catalyzes the cis-dehydration of 3-dehydroquinate (DHQ) and introduces the first double bond of the aromatic ring to yield 3-dehydroshikimate. The sequence is that of 3-dehydroquinate dehydratase from Pyrobaculum aerophilum (strain ATCC 51768 / DSM 7523 / JCM 9630 / CIP 104966 / NBRC 100827 / IM2).